A 245-amino-acid chain; its full sequence is Probable transcriptional regulatory protein SUN_1622 (245 aa).

This sequence belongs to the TACO1 family.

The protein localises to the cytoplasm. The sequence is that of Probable transcriptional regulatory protein SUN_1622 from Sulfurovum sp. (strain NBC37-1).